Here is a 275-residue protein sequence, read N- to C-terminus: MTANVYALVAAAGSGTRLGFDTPKAFVELNGRSLLERSLDGLAASQSIEETIVLVSENMRDHAERIVNDPINVAEWAPMTVSVELGGGERFDSVYAGLVAIQRRLSAADEAPEGRFVAVHDAARCLTPPAMIAEVVDRARRGVADGSWYGAIPVLPVVDTIKVIDAPTSGPRAGQTVVEQTPDRASLRAAATPQVFDLGKLIEANEQYLRTTEISSAHAVDRVGASPLPLVTDDASLMEMAGFPVVAVDADPLAMKITTAQDYRVAQMILNGSEG.

Belongs to the IspD/TarI cytidylyltransferase family. IspD subfamily.

It catalyses the reaction 2-C-methyl-D-erythritol 4-phosphate + CTP + H(+) = 4-CDP-2-C-methyl-D-erythritol + diphosphate. The protein operates within isoprenoid biosynthesis; isopentenyl diphosphate biosynthesis via DXP pathway; isopentenyl diphosphate from 1-deoxy-D-xylulose 5-phosphate: step 2/6. Catalyzes the formation of 4-diphosphocytidyl-2-C-methyl-D-erythritol from CTP and 2-C-methyl-D-erythritol 4-phosphate (MEP). The protein is 2-C-methyl-D-erythritol 4-phosphate cytidylyltransferase of Corynebacterium jeikeium (strain K411).